The primary structure comprises 274 residues: Kit ligand (274 aa).

A signal peptide spans 1-25 (MKKTQTWIITCIYLQLLLFNPLVKT). Topologically, residues 26 to 215 (KGICGKRVTD…SNSIGDSNLQ (190 aa)) are extracellular. Disulfide bonds link C29–C114 and C68–C164. N90, N97, N145, and N196 each carry an N-linked (GlcNAc...) asparagine glycan. A helical transmembrane segment spans residues 216 to 238 (WAAMALPAFFSLVIGFAFGALYW). At 239–274 (KKKQPNLTRTVENIQINEEDNEISMLQEKEREFQEV) the chain is on the cytoplasmic side.

The protein belongs to the SCF family. As to quaternary structure, homodimer, non-covalently linked. In terms of processing, a soluble form is produced by proteolytic processing of the extracellular domain.

The protein resides in the cytoplasm. The protein localises to the cytoskeleton. Its subcellular location is the cell membrane. It localises to the cell projection. It is found in the lamellipodium. The protein resides in the filopodium. The protein localises to the secreted. Its function is as follows. Stimulates the proliferation of mast cells. Able to augment the proliferation of both myeloid and lymphoid hematopoietic progenitors in bone marrow culture. Also mediates cell-cell adhesion. Acts synergistically with other cytokines, probably interleukins. The protein is Kit ligand (KITLG) of Canis lupus familiaris (Dog).